Reading from the N-terminus, the 66-residue chain is Toxin Tppa2 (66 aa).

Residues 1 to 63 (KDGYLVGNDG…TWSRATNKCG (63 aa)) enclose the LCN-type CS-alpha/beta domain. 4 disulfide bridges follow: cysteine 11/cysteine 62, cysteine 15/cysteine 37, cysteine 23/cysteine 43, and cysteine 27/cysteine 45. Cysteine 62 is subject to Cysteine amide.

It belongs to the long (4 C-C) scorpion toxin superfamily. Sodium channel inhibitor family. Beta subfamily. As to expression, expressed by the venom gland.

Its subcellular location is the secreted. Beta toxins bind voltage-independently at site-4 of sodium channels (Nav) and shift the voltage of activation toward more negative potentials thereby affecting sodium channel activation and promoting spontaneous and repetitive firing. This Tityus pachyurus (Colombian scorpion) protein is Toxin Tppa2.